Consider the following 203-residue polypeptide: Small ribosomal subunit protein uS4 (203 aa).

Residues 93-153 form the S4 RNA-binding domain; that stretch reads RRFDNVVFRA…QKSQNLDAVA (61 aa).

This sequence belongs to the universal ribosomal protein uS4 family. As to quaternary structure, part of the 30S ribosomal subunit. Contacts protein S5. The interaction surface between S4 and S5 is involved in control of translational fidelity.

In terms of biological role, one of the primary rRNA binding proteins, it binds directly to 16S rRNA where it nucleates assembly of the body of the 30S subunit. With S5 and S12 plays an important role in translational accuracy. This Chlorobium phaeobacteroides (strain BS1) protein is Small ribosomal subunit protein uS4.